The chain runs to 306 residues: Agmatinase (306 aa).

Positions 126, 149, 151, 153, 230, and 232 each coordinate Mn(2+).

This sequence belongs to the arginase family. Agmatinase subfamily. Mn(2+) is required as a cofactor.

It catalyses the reaction agmatine + H2O = urea + putrescine. It participates in amine and polyamine biosynthesis; putrescine biosynthesis via agmatine pathway; putrescine from agmatine: step 1/1. Functionally, catalyzes the formation of putrescine from agmatine. The polypeptide is Agmatinase (Escherichia coli O9:H4 (strain HS)).